The following is a 449-amino-acid chain: Bifunctional protein GlmU (449 aa).

A pyrophosphorylase region spans residues 1-226 (MVIVAVLAAG…YEEILGVNDR (226 aa)). Residues 7–10 (LAAG), Lys21, Gln73, and 78–79 (GT) each bind UDP-N-acetyl-alpha-D-glucosamine. Asp103 is a Mg(2+) binding site. UDP-N-acetyl-alpha-D-glucosamine is bound by residues Gly140, Glu155, Asn170, and Asn224. Asn224 lines the Mg(2+) pocket. The interval 227–247 (VQLAAAYQVLQNRIKKAWMQA) is linker. An N-acetyltransferase region spans residues 248–449 (GVTLIDPASI…VVKPNWEPEA (202 aa)). The UDP-N-acetyl-alpha-D-glucosamine site is built by Arg329 and Lys347. The Proton acceptor role is filled by His359. Tyr362 and Asn373 together coordinate UDP-N-acetyl-alpha-D-glucosamine. Acetyl-CoA contacts are provided by residues Ala376, 382–383 (NY), Ala419, and Arg436.

This sequence in the N-terminal section; belongs to the N-acetylglucosamine-1-phosphate uridyltransferase family. In the C-terminal section; belongs to the transferase hexapeptide repeat family. In terms of assembly, homotrimer. The cofactor is Mg(2+).

The protein resides in the cytoplasm. The catalysed reaction is alpha-D-glucosamine 1-phosphate + acetyl-CoA = N-acetyl-alpha-D-glucosamine 1-phosphate + CoA + H(+). The enzyme catalyses N-acetyl-alpha-D-glucosamine 1-phosphate + UTP + H(+) = UDP-N-acetyl-alpha-D-glucosamine + diphosphate. Its pathway is nucleotide-sugar biosynthesis; UDP-N-acetyl-alpha-D-glucosamine biosynthesis; N-acetyl-alpha-D-glucosamine 1-phosphate from alpha-D-glucosamine 6-phosphate (route II): step 2/2. It participates in nucleotide-sugar biosynthesis; UDP-N-acetyl-alpha-D-glucosamine biosynthesis; UDP-N-acetyl-alpha-D-glucosamine from N-acetyl-alpha-D-glucosamine 1-phosphate: step 1/1. It functions in the pathway bacterial outer membrane biogenesis; LPS lipid A biosynthesis. Its function is as follows. Catalyzes the last two sequential reactions in the de novo biosynthetic pathway for UDP-N-acetylglucosamine (UDP-GlcNAc). The C-terminal domain catalyzes the transfer of acetyl group from acetyl coenzyme A to glucosamine-1-phosphate (GlcN-1-P) to produce N-acetylglucosamine-1-phosphate (GlcNAc-1-P), which is converted into UDP-GlcNAc by the transfer of uridine 5-monophosphate (from uridine 5-triphosphate), a reaction catalyzed by the N-terminal domain. In Thermosynechococcus vestitus (strain NIES-2133 / IAM M-273 / BP-1), this protein is Bifunctional protein GlmU.